The chain runs to 591 residues: MFGIQESIQRSGSSMKEEPLGSGMNAVRTWMQGAGVLDANTAAQSGVGLARAHFEKQPPSNLRKSNFFHFVLALYDRQGQPVEIERTAFVGFVEKEKEANSEKTNNGIHYRLQLLYSNGIRTEQDFYVRLIDSMTKQAIVYEGQDKNPEMCRVLLTHEIMCSRCCDKKSCGNRNETPSDPVIIDRFFLKFFLKCNQNCLKNAGNPRDMRRFQVVVSTTVNVDGHVLAVSDNMFVHNNSKHGRRARRLDPSEGTPSYLEHATPCIKAISPSEGWTTGGATVIIIGDNFFDGLQVIFGTMLVWSELITPHAIRVQTPPRHIPGVVEVTLSYKSKQFCKGTPGRFIYTALNEPTIDYGFQRLQKVIPRHPGDPERLPKEVILKRAADLVEALYGMPHNNQEIILKRAADIAEALYSVPRNHNQLPALANTSVHAGMMGVNSFSGQLAVNVSEASQATNQGFTRNSSSVSPHGYVPSTTPQQTNYNSVTTSMNGYGSAAMSNLGGSPTFLNGSAANSPYAIVPSSPTMASSTSLPSNCSSSSGIFSFSPANMVSAVKQKSAFAPVVRPQTSPPPTCTSTNGNSLQAISGMIVPPM.

The residue at position 1 (Met1) is an N-acetylmethionine. Polar residues predominate over residues 1-14; that stretch reads MFGIQESIQRSGSS. Residues 1-21 are disordered; that stretch reads MFGIQESIQRSGSSMKEEPLG. Lys16 participates in a covalent cross-link: Glycyl lysine isopeptide (Lys-Gly) (interchain with G-Cter in SUMO1); alternate. Lys16 participates in a covalent cross-link: Glycyl lysine isopeptide (Lys-Gly) (interchain with G-Cter in SUMO2); alternate. Positions 63 to 66 are interaction with DNA; it reads RKSN. The segment at 151–170 adopts a C5-type zinc-finger fold; that stretch reads CRVLLTHEIMCSRCCDKKSC. 2 interaction with DNA regions span residues 197–204 and 236–239; these read NCLKNAGN and NNSK. An IPT/TIG domain is found at 262–345; the sequence is PCIKAISPSE…KGTPGRFIYT (84 aa). The tract at residues 457–480 is disordered; that stretch reads GFTRNSSSVSPHGYVPSTTPQQTN.

This sequence belongs to the COE family. In terms of assembly, homodimer. Interacts with ZNF423 and ZNF521, leading to prevent EBF1 to bind DNA and activate target genes. Interacts with CCR4-NOT component CNOT3. (Microbial infection) Interacts with Epstein-barr virus protein EBNA2.

The protein localises to the nucleus. Functionally, key pioneer transcription factor of B-cell specification and commitment. Recognizes variations of the palindromic sequence 5'-ATTCCCNNGGGAATT-3'. Operates in a transcription factor network to activate B-cell-specific genes and repress genes associated with alternative cell fates. For instance, positively regulates many B-cell specific genes including BCR or CD40 while repressing genes that direct cells into alternative lineages, including GATA3 and TCF7 for the T-cell lineage. In addition to its role during lymphopoiesis, controls the thermogenic gene program in adipocytes during development and in response to environmental cold. (Microbial infection) Acts as a chromatin anchor for Epstein-Barr virus EBNA2 to mediate the assembly of EBNA2 chromatin complexes in B-cells. In addition, binds to the viral LMP1 proximal promoter and promotes its expression during latency. In Homo sapiens (Human), this protein is Transcription factor COE1 (EBF1).